A 142-amino-acid chain; its full sequence is Large ribosomal subunit protein uL13 (142 aa).

This sequence belongs to the universal ribosomal protein uL13 family. Part of the 50S ribosomal subunit.

In terms of biological role, this protein is one of the early assembly proteins of the 50S ribosomal subunit, although it is not seen to bind rRNA by itself. It is important during the early stages of 50S assembly. The sequence is that of Large ribosomal subunit protein uL13 from Pectobacterium carotovorum subsp. carotovorum (strain PC1).